Consider the following 156-residue polypeptide: Ribosomal RNA large subunit methyltransferase H (156 aa).

S-adenosyl-L-methionine-binding positions include Leu73, Gly104, and 123-128 (LSALTL).

The protein belongs to the RNA methyltransferase RlmH family. As to quaternary structure, homodimer.

It is found in the cytoplasm. The enzyme catalyses pseudouridine(1915) in 23S rRNA + S-adenosyl-L-methionine = N(3)-methylpseudouridine(1915) in 23S rRNA + S-adenosyl-L-homocysteine + H(+). Specifically methylates the pseudouridine at position 1915 (m3Psi1915) in 23S rRNA. In Shewanella putrefaciens (strain CN-32 / ATCC BAA-453), this protein is Ribosomal RNA large subunit methyltransferase H.